We begin with the raw amino-acid sequence, 938 residues long: Protein translocase subunit SecA (938 aa).

ATP-binding positions include glutamine 90, 108–112 (GEGKT), and aspartate 504.

It belongs to the SecA family. Monomer and homodimer. Part of the essential Sec protein translocation apparatus which comprises SecA, SecYEG and auxiliary proteins SecDF. Other proteins may also be involved.

It is found in the cell inner membrane. The protein localises to the cellular thylakoid membrane. The protein resides in the cytoplasm. The catalysed reaction is ATP + H2O + cellular proteinSide 1 = ADP + phosphate + cellular proteinSide 2.. Its function is as follows. Part of the Sec protein translocase complex. Interacts with the SecYEG preprotein conducting channel. Has a central role in coupling the hydrolysis of ATP to the transfer of proteins into and across the cell membrane, serving as an ATP-driven molecular motor driving the stepwise translocation of polypeptide chains across the membrane. Probably participates in protein translocation into and across both the cytoplasmic and thylakoid membranes in cyanobacterial cells. This chain is Protein translocase subunit SecA, found in Picosynechococcus sp. (strain ATCC 27264 / PCC 7002 / PR-6) (Agmenellum quadruplicatum).